Here is a 181-residue protein sequence, read N- to C-terminus: NADH-quinone oxidoreductase subunit I (181 aa).

4Fe-4S ferredoxin-type domains follow at residues 52-81 (TRDS…LKKG) and 91-120 (KFFR…LTPD). [4Fe-4S] cluster-binding residues include Cys-61, Cys-64, Cys-67, Cys-71, Cys-100, Cys-103, Cys-106, and Cys-110.

Belongs to the complex I 23 kDa subunit family. NDH-1 is composed of 13 different subunits. Subunits NuoA, H, J, K, L, M, N constitute the membrane sector of the complex. The cofactor is [4Fe-4S] cluster.

It is found in the cell inner membrane. It catalyses the reaction a quinone + NADH + 5 H(+)(in) = a quinol + NAD(+) + 4 H(+)(out). Functionally, NDH-1 shuttles electrons from NADH, via FMN and iron-sulfur (Fe-S) centers, to quinones in the respiratory chain. The immediate electron acceptor for the enzyme in this species is believed to be ubiquinone. Couples the redox reaction to proton translocation (for every two electrons transferred, four hydrogen ions are translocated across the cytoplasmic membrane), and thus conserves the redox energy in a proton gradient. The sequence is that of NADH-quinone oxidoreductase subunit I from Blochmanniella pennsylvanica (strain BPEN).